We begin with the raw amino-acid sequence, 790 residues long: N-methylputrescine oxidase 1, peroxisomal (790 aa).

Residues 1-23 (MATTKQKVTAPSPSPSSSTASCC) are disordered. Low complexity predominate over residues 9-23 (TAPSPSPSSSTASCC). Position 423 to 434 (423 to 434 (AFDAGEDGLGKN)) interacts with substrate. Aspartate 425 acts as the Proton acceptor in catalysis. Residues cysteine 444 and cysteine 470 are joined by a disulfide bond. 506 to 511 (VANYEY) contributes to the substrate binding site. The active-site Schiff-base intermediate with substrate; via topaquinone is the tyrosine 509. The residue at position 509 (tyrosine 509) is a 2',4',5'-topaquinone. Cu cation-binding residues include histidine 559 and histidine 561. Mn(2+)-binding residues include aspartate 714 and isoleucine 715. Residue histidine 725 participates in Cu cation binding.

The protein belongs to the copper/topaquinone oxidase family. In terms of assembly, homodimer. Cu cation serves as cofactor. It depends on Zn(2+) as a cofactor. The cofactor is L-topaquinone. Post-translationally, topaquinone (TPQ) is generated by copper-dependent autoxidation of a specific tyrosyl residue. Mainly expressed in roots, and, to a lower extent, in stems.

It localises to the peroxisome. It catalyses the reaction a primary methyl amine + O2 + H2O = an aldehyde + H2O2 + NH4(+). The catalysed reaction is N-methylputrescine + O2 + H2O = 4-methylaminobutanal + H2O2 + NH4(+). The protein operates within alkaloid biosynthesis; nicotine biosynthesis. Functionally, involved in the biosynthesis of pyridine alkaloid natural products, leading mainly to the production of anabasine, anatabine, nicotine and nornicotine, effective deterrents against herbivores with antiparasitic and pesticide properties (neurotoxins); nornicotine serves as the precursor in the synthesis of the carcinogen compound N'-nitrosonornicotine (NNN). Amine oxidase which mediates the deamination of N-methylputrescine to produce 4-methylaminobutanal. Oxidizes preferentially N-methylated amines. The polypeptide is N-methylputrescine oxidase 1, peroxisomal (Nicotiana tabacum (Common tobacco)).